A 626-amino-acid chain; its full sequence is MRKKKFKAESKRLLDMMINSIYTQKEIFLRELISNASDAIDKIYYKALTDDSLTFDQDNYYIKVTADKEARTLTVTDTGIGMTKDELEQHLGTIAKSGSLAFKQENDSKDGHDIIGQFGVGFYAAFMVADKVTVKSKALGSDEAYVWESEGAAGYTIAPCDKETIGTEITLKIKENTEDESYDEFLENYRIKAIVKKYSDFIRYPIKMEETVNKPKEGSENEFEEVQEEQTVNSMVPIWRKNKSELTDEDYEAFYAEKHYGFDKPLTHVHISVDGAVRYNSILFIPENMPFDYYTKEFEKGLELYSNGVLIMNKCADLLPDHFSFVKGMVDSEDLSLNISREMLQHDRQLKLIAKNINKKIKAELKSLLKNKREKYESFYESFGRQLKFGVYNDFGANKDVLKDLLLFYSSKEKKLVTLDEYVSRMPEDQKYIYYASGDSYERIEKLPQTEMVADKGYEILYFTEDIDEFAIKMLTSYEEKEFKSVSSADLGIDSDEDEKQTEAEENEYKDLFESMKEILADKVKNVRASKRLKSHPVCFATDGEVTIEMEKVLNAMPDSQQVKAEKVLEINPNHEVFETLKNAHGQDREKLALYTNLLYNQALLIEGLPIHDPVEFTNDICKVMV.

Residues 1–341 are a; substrate-binding; the sequence is MRKKKFKAES…SEDLSLNISR (341 aa). The segment at 342-552 is b; sequence EMLQHDRQLK…DGEVTIEMEK (211 aa). Residues 553–626 are c; it reads VLNAMPDSQQ…FTNDICKVMV (74 aa).

It belongs to the heat shock protein 90 family. Homodimer.

The protein resides in the cytoplasm. Functionally, molecular chaperone. Has ATPase activity. This chain is Chaperone protein HtpG, found in Bacillus velezensis (strain DSM 23117 / BGSC 10A6 / LMG 26770 / FZB42) (Bacillus amyloliquefaciens subsp. plantarum).